The following is a 411-amino-acid chain: Secretion apparatus protein BsaZ (411 aa).

A run of 4 helical transmembrane segments spans residues 28-48 (IVALIVIATGALAAPALVDLT), 80-100 (IAAPFVLLCAAAGALPSLVQS), 137-157 (ALLYVGVFALTVRVFADLYHA), and 175-195 (IVLTVRLVLLFLLCALPVLIL). Residues 341–411 (AANRGGPPPE…APARTGDQNA (71 aa)) form a disordered region. Over residues 370–404 (DACADNAFPDDAPPGAAAPNAGSPDGPAPDGGAPA) the composition is skewed to low complexity.

It belongs to the type III secretion exporter family.

The protein localises to the cell membrane. Functionally, part of the bsa type III secretion system, is involved in the intracellular replication of invading bacteria inside the host cell. Probably necessary for the lysis of the vacuole membrane and escape into the host cell cytoplasm. The sequence is that of Secretion apparatus protein BsaZ (bsaZ) from Burkholderia pseudomallei (strain K96243).